The following is a 112-amino-acid chain: Histone H3-4 (112 aa).

Residues 1–31 are disordered; it reads QTGAKAPRKALANKAARKTAPADGGVKKPHR.

This sequence belongs to the histone H3 family. As to quaternary structure, the nucleosome is a histone octamer containing two molecules each of H2A, H2B, H3 and H4 assembled in one H3-H4 heterotetramer and two H2A-H2B heterodimers. The octamer wraps approximately 147 bp of DNA.

The protein resides in the nucleus. Its subcellular location is the chromosome. In terms of biological role, core component of nucleosome. Nucleosomes wrap and compact DNA into chromatin, limiting DNA accessibility to the cellular machineries which require DNA as a template. Histones thereby play a central role in transcription regulation, DNA repair, DNA replication and chromosomal stability. DNA accessibility is regulated via a complex set of post-translational modifications of histones, also called histone code, and nucleosome remodeling. In Stylonychia lemnae (Ciliate), this protein is Histone H3-4 (H3-4).